Consider the following 461-residue polypeptide: Lysosomal proton-coupled steroid conjugate and bile acid symporter SLC46A3 (461 aa).

Residues 1-25 (MKIPFVEPVICLSVFAVTLNSPLTT) form the signal peptide. Topologically, residues 26–70 (QYVYRRIWEETGNYSIALESNTSECAKNKSSPIFAFQEEVQKKVS) are extracellular. N-linked (GlcNAc...) asparagine glycosylation is found at N38, N46, and N53. Residues 71-91 (LFNLEMDISGLIPGLVSTFVF) traverse the membrane as a helical segment. The Cytoplasmic portion of the chain corresponds to 92-101 (LSHSDHGGRK). Residues 102-124 (FPLILSSVGALANSAWLCLLSYF) traverse the membrane as a helical segment. Over 125-133 (ALPIQLLIA) the chain is Extracellular. A helical transmembrane segment spans residues 134-156 (STFIGALFGNYTTFLGASFAYIV). Over 157–170 (DQCKEKKQRTIRIA) the chain is Cytoplasmic. Residues 171–191 (IIDFLFGVVSGLTGLSSGYFI) traverse the membrane as a helical segment. Residues 192-195 (RGLG) lie on the Extracellular side of the membrane. Residues 196-216 (FVWSFLIVTVALFVNLIYILL) form a helical membrane-spanning segment. Over 217 to 261 (FLEDSMKESSSQNISVSWTETFKNLFHRTYMLFKNASGEQQSLCC) the chain is Cytoplasmic. A helical transmembrane segment spans residues 262 to 282 (LLLFTMITYFFVTIGVSPIFV). Residues 283 to 294 (LYELDSPLCWDE) lie on the Extracellular side of the membrane. Residues 295 to 315 (VLIGYGSALGSVTFFSSFLGI) traverse the membrane as a helical segment. At 316-324 (WLFSYCMED) the chain is on the cytoplasmic side. A helical membrane pass occupies residues 325 to 345 (IHMAFIGTFTTMVGMAMTAFA). Residues 346 to 347 (RT) lie on the Extracellular side of the membrane. A helical transmembrane segment spans residues 348 to 368 (TLMMFLVRLPFLFTVMPLSVL). At 369–382 (RSMISKVVHSTEQG) the chain is on the cytoplasmic side. A helical membrane pass occupies residues 383 to 403 (TMFACLAFLETLGGITAVSTF). At 404-415 (NGIYSATVAWCK) the chain is on the extracellular side. The helical transmembrane segment at 416 to 436 (GFVFLLSAVLLLIPAISLCVI) threads the bilayer. The Cytoplasmic portion of the chain corresponds to 437–461 (KYVSRNTGSYVLLIQEESSEDTSDR). The Tyrosine-based lysosomal-sorting motif signature appears at 446-449 (YVLL).

Belongs to the major facilitator superfamily. SLC46A family.

The protein resides in the lysosome membrane. The catalysed reaction is estrone 3-sulfate(out) + n H(+)(out) = estrone 3-sulfate(in) + n H(+)(in). It catalyses the reaction 25-hydroxyvitamin D3 sulfate(out) + n H(+)(out) = 25-hydroxyvitamin D3 sulfate(in) + n H(+)(in). The enzyme catalyses cholate(out) + n H(+)(out) = cholate(in) + n H(+)(in). It carries out the reaction glycocholate(out) + n H(+)(out) = glycocholate(in) + n H(+)(in). The catalysed reaction is taurocholate(out) + n H(+)(out) = taurocholate(in) + n H(+)(in). It catalyses the reaction dehydroepiandrosterone 3-sulfate(out) + n H(+)(out) = dehydroepiandrosterone 3-sulfate(in) + n H(+)(in). The enzyme catalyses N-acetyl-D-muramoyl-L-alanyl-D-isoglutamine(out) + n H(+)(out) = N-acetyl-D-muramoyl-L-alanyl-D-isoglutamine(in) + n H(+)(in). It carries out the reaction 2',3'-cGAMP(out) + n H(+)(out) = 2',3'-cGAMP(in) + n H(+)(in). Functionally, lysosomal proton-coupled steroid conjugate and bile acid transporter. Preferentially recognizes lipophilic steroid conjugates or bile acis as endogenous substrates and seems to mediate escape from lysosomes to the cytoplasm. Modulates hepatic cytosolic copper homeostasis, maybe acting as a lysosomal copper transporter and sequestering copper ions in the lysosome. Delivers pathogen-associated molecular patterns to cytosolic pattern recognition receptors as part of the innate immune response to microbes. Selectively transports bacterial muramyl dipeptide (MDP) into the cytosol for recognition by NOD2, triggering inflammatory responses. Likely acts as a redundant importer of cyclic GMP-AMP dinucleotides (cGAMPs) in monocyte and macrophage cell lineages. The transport mechanism, its electrogenicity and stoichiometry remain to be elucidated. The protein is Lysosomal proton-coupled steroid conjugate and bile acid symporter SLC46A3 (SLC46A3) of Bos taurus (Bovine).